The chain runs to 330 residues: Cytoskeleton protein RodZ (330 aa).

Topologically, residues 1–111 are cytoplasmic; sequence MNTEATQDHQ…LGKRRKKRDG (111 aa). The HTH cro/C1-type domain occupies 19-71; it reads LRHAREQLGLSQQAVAERLCLKVSTVRDIEDDKAPADLASTFLRGYIRSYARL. The H-T-H motif DNA-binding region spans 30–49; that stretch reads QQAVAERLCLKVSTVRDIED. The chain crosses the membrane as a helical; Signal-anchor for type II membrane protein span at residues 112 to 132; it reads WLMSFTWLVLFVVIGLSGAWW. The Periplasmic portion of the chain corresponds to 133 to 330; sequence WQDHKAQQEE…TLNAEQSPAQ (198 aa). The segment covering 146–166 has biased composition (polar residues); that stretch reads MADQSSAELNGGDANSQNVPL. A disordered region spans residues 146–237; it reads MADQSSAELN…ASPLPTDQAN (92 aa). Composition is skewed to low complexity over residues 176 to 202 and 216 to 233; these read TDSAANSAPTDTASTPTTSAPAQTPAD and TAGTAPTTPATPASPLPT.

This sequence belongs to the RodZ family.

It localises to the cell inner membrane. Functionally, cytoskeletal protein that is involved in cell-shape control through regulation of the length of the long axis. This is Cytoskeleton protein RodZ from Klebsiella pneumoniae (strain 342).